Reading from the N-terminus, the 459-residue chain is MAP kinase-interacting serine/threonine-protein kinase 2 (459 aa).

The tract at residues 28–67 (LDPAQHGDSDFSPQCEARPDMPSSQPIDIPDAKKRGRKKK) is disordered. Residues 60 to 66 (KKRGRKK) carry the Nuclear localization signal motif. Ser74 carries the phosphoserine modification. One can recognise a Protein kinase domain in the interval 84–368 (QLQEDVLGEG…AAQVLQHPWV (285 aa)). ATP is bound by residues 90–98 (LGEGAHARV) and Lys113. 160–162 (EKM) lines the staurosporine pocket. Asp205 acts as the Proton acceptor in catalysis. Staurosporine is bound at residue Glu209. Phosphothreonine occurs at positions 244 and 249. Zn(2+) is bound by residues Cys299, Cys311, and Cys314. At Thr379 the chain carries Phosphothreonine. Phosphoserine occurs at positions 431 and 434. Positions 438 to 442 (LAQRR) match the MAP kinase binding motif. Ser446 carries the post-translational modification Phosphoserine. At Thr450 the chain carries Phosphothreonine.

This sequence belongs to the protein kinase superfamily. CAMK Ser/Thr protein kinase family. Monomer. Interacts with the C-terminal regions of EIF4G1 and EIF4G2; this interaction is promoted when MAPK pathways are repressed but repressed upon ERK proteins activation. Also binds to dephosphorylated MAPK3/ERK1 and MAPK1/ER2K. Interaction with phosphorylated MAPK3/ERK1 and MAPK1/ER2K protects it from dephosphorylation and inactivation. Interacts with ESR2 and EIF4E in the nucleus. Mg(2+) is required as a cofactor. The cofactor is Zn(2+). In terms of processing, dual phosphorylation of Thr-244 and Thr-249 activates the kinase. Phosphorylation of Thr-379 activates the kinase. Phosphorylated upon arsenic trioxide As(2)O(3) treatment. Phosphorylated by MAPK1/ERK2, MAPK11 and MAPK14. Dephosphorylated by PP2A.

It localises to the cytoplasm. The protein resides in the nucleus. The protein localises to the PML body. It carries out the reaction L-seryl-[protein] + ATP = O-phospho-L-seryl-[protein] + ADP + H(+). The enzyme catalyses L-threonyl-[protein] + ATP = O-phospho-L-threonyl-[protein] + ADP + H(+). Inhibited by CGP57380 and staurosporine. Serine/threonine-protein kinase that phosphorylates SFPQ/PSF, HNRNPA1 and EIF4E. May play a role in the response to environmental stress and cytokines. Appears to regulate translation by phosphorylating EIF4E, thus increasing the affinity of this protein for the 7-methylguanosine-containing mRNA cap. Required for mediating PP2A-inhibition-induced EIF4E phosphorylation. Triggers EIF4E shuttling from cytoplasm to nucleus. Enhances the formation of EIF4F complex in pachytene spermatocytes, thus promoting mRNA translation during spermatogenesis. Displays a high basal kinase activity. Acts as a mediator of the suppressive effects of IFNgamma on hematopoiesis. Negative regulator for signals that control generation of arsenic trioxide As(2)O(3)-dependent apoptosis and anti-leukemic responses. Involved in anti-apoptotic signaling in response to serum withdrawal. The protein is MAP kinase-interacting serine/threonine-protein kinase 2 (Mknk2) of Rattus norvegicus (Rat).